The chain runs to 62 residues: Conotoxin Pn-014 (62 aa).

The signal sequence occupies residues 1 to 22; it reads MRCLPVFVILLLLIASAPSVDA. A propeptide spanning residues 23-48 is cleaved from the precursor; it reads RPKTKDDIPLVSFQDHAKRILQTFES. At W61 the chain carries Tryptophan amide.

This sequence belongs to the conotoxin T superfamily. Post-translationally, contains 2 disulfide bonds that can be either 'C1-C3, C2-C4' or 'C1-C4, C2-C3', since these disulfide connectivities have been observed for conotoxins with cysteine framework V (for examples, see AC P0DQQ7 and AC P81755). Expressed by the venom duct.

The protein localises to the secreted. This chain is Conotoxin Pn-014, found in Conus pennaceus (Feathered cone).